We begin with the raw amino-acid sequence, 282 residues long: Shikimate dehydrogenase (NADP(+)) (282 aa).

Residues 18–20 and Thr-65 contribute to the shikimate site; that span reads SRS. Lys-69 acts as the Proton acceptor in catalysis. Asn-90 and Asp-106 together coordinate shikimate. NADP(+) contacts are provided by residues 134-138, 158-163, and Ile-223; these read GAGGA and NRTAAR. Residue Tyr-225 coordinates shikimate. Gly-246 serves as a coordination point for NADP(+).

This sequence belongs to the shikimate dehydrogenase family. Homodimer.

It catalyses the reaction shikimate + NADP(+) = 3-dehydroshikimate + NADPH + H(+). Its pathway is metabolic intermediate biosynthesis; chorismate biosynthesis; chorismate from D-erythrose 4-phosphate and phosphoenolpyruvate: step 4/7. Its function is as follows. Involved in the biosynthesis of the chorismate, which leads to the biosynthesis of aromatic amino acids. Catalyzes the reversible NADPH linked reduction of 3-dehydroshikimate (DHSA) to yield shikimate (SA). This chain is Shikimate dehydrogenase (NADP(+)), found in Methylobacterium radiotolerans (strain ATCC 27329 / DSM 1819 / JCM 2831 / NBRC 15690 / NCIMB 10815 / 0-1).